Consider the following 347-residue polypeptide: Methylthioribose-1-phosphate isomerase (347 aa).

Residues 46–48 (RGA), Arg-89, and Gln-196 each bind substrate. The active-site Proton donor is the Asp-237. 247-248 (NK) is a binding site for substrate.

The protein belongs to the eIF-2B alpha/beta/delta subunits family. MtnA subfamily.

It carries out the reaction 5-(methylsulfanyl)-alpha-D-ribose 1-phosphate = 5-(methylsulfanyl)-D-ribulose 1-phosphate. The protein operates within amino-acid biosynthesis; L-methionine biosynthesis via salvage pathway; L-methionine from S-methyl-5-thio-alpha-D-ribose 1-phosphate: step 1/6. In terms of biological role, catalyzes the interconversion of methylthioribose-1-phosphate (MTR-1-P) into methylthioribulose-1-phosphate (MTRu-1-P). This Chloroflexus aurantiacus (strain ATCC 29366 / DSM 635 / J-10-fl) protein is Methylthioribose-1-phosphate isomerase.